Reading from the N-terminus, the 478-residue chain is GTPase Obg (478 aa).

The 158-residue stretch at 2–159 (TTFVDRVELH…QDIHLELKTV (158 aa)) folds into the Obg domain. The disordered stretch occupies residues 60 to 88 (YHHSPHRKATNGKPGEGGNRSGKDGQDLV). Residues 160-330 (ADVALVGYPS…LSFALAELVA (171 aa)) form the OBG-type G domain. GTP is bound by residues 166–173 (GYPSAGKS), 191–195 (FTTLV), 212–215 (DVPG), 282–285 (NKID), and 311–313 (SAV). Positions 173 and 193 each coordinate Mg(2+). One can recognise an OCT domain in the interval 348 to 430 (PKAVDDAGFT…DNAVVFDWEP (83 aa)). Residues 438-478 (MLGRRGEDHRFEAPRPAAQRRRDRDAERDEAQQEFDGFEPF) are disordered. 2 stretches are compositionally biased toward basic and acidic residues: residues 439 to 450 (LGRRGEDHRFEA) and 457 to 468 (RRRDRDAERDEA). Residues 469–478 (QQEFDGFEPF) are compositionally biased toward acidic residues.

Belongs to the TRAFAC class OBG-HflX-like GTPase superfamily. OBG GTPase family. In terms of assembly, monomer. Mg(2+) is required as a cofactor.

Its subcellular location is the cytoplasm. The protein localises to the cell membrane. In terms of biological role, plays an unknown essential role and a regulatory role in sporulation. Overexpression suppresses sporulation although cell growth rate was not reduced. Impaired differentiation was eliminated by addition of decoyinine, an inhibitor of GMP synthesis. Overexpression has no effect on undecylprodigiosin production, but decreases actinorhodin production. Functionally, an essential GTPase which binds GTP, GDP and possibly (p)ppGpp with moderate affinity, with high nucleotide exchange rates and a fairly low GTP hydrolysis rate. Plays a role in control of the cell cycle, stress response, ribosome biogenesis and in those bacteria that undergo differentiation, in morphogenesis control. The polypeptide is GTPase Obg (Streptomyces coelicolor (strain ATCC BAA-471 / A3(2) / M145)).